We begin with the raw amino-acid sequence, 275 residues long: Secreted RxLR effector protein 153 (275 aa).

Residues 1–27 (MRNRAFLFGLFFIEYACLVLFAAPTRA) form the signal peptide. Residue asparagine 45 is glycosylated (N-linked (GlcNAc...) asparagine). The RxLR-dEER signature appears at 48-63 (RTLQADDSKRISAEER).

This sequence belongs to the RxLR effector family.

It is found in the secreted. Its subcellular location is the host cell membrane. Its function is as follows. Secreted effector that completely suppresses the host cell death induced by cell death-inducing proteins. In Plasmopara viticola (Downy mildew of grapevine), this protein is Secreted RxLR effector protein 153.